The primary structure comprises 434 residues: MDIVLVGLNHKTAPVDIRECFAFDSLEADAGLKELSRIPELTEAVLISTCNRVEIAAACQDPDEGIAAIKDFFSRTKSMPLENFEQNLFVYKGDEAVQHVFRVASSLDSMVLGEPQILGQMKESYRLATQAKTTGAVLNRLMHRCFMTAKRVRKETGIGDHAVSISYAAVELARKIFGELTDKKVLLIGAGEMAELAVEHLLNHRAAGVFVANRTFERAVALAERFRGTPIRLEEVEEHLKIADIIISSTGAPGYVLEKKDVKKVLRARKNRPLFFIDIAVPRDIDPAINNLSNNFVYDIDDLQGVIDRNIDERQKEAVRAERIVDENVIKYRTWLEGLDIVPTIVSLQKKLEAIRQAEMAKSLANIPEIDEKGREAIERLTQSIINKVMHDPIQFLKAGGHREKQKKEVLGFTRDIFNLNNPQNGDEFTPDEE.

Residues 49–52, S109, 114–116, and Q120 each bind substrate; these read TCNR and EPQ. The Nucleophile role is filled by C50. 189–194 is an NADP(+) binding site; it reads GAGEMA.

This sequence belongs to the glutamyl-tRNA reductase family. In terms of assembly, homodimer.

The catalysed reaction is (S)-4-amino-5-oxopentanoate + tRNA(Glu) + NADP(+) = L-glutamyl-tRNA(Glu) + NADPH + H(+). Its pathway is porphyrin-containing compound metabolism; protoporphyrin-IX biosynthesis; 5-aminolevulinate from L-glutamyl-tRNA(Glu): step 1/2. In terms of biological role, catalyzes the NADPH-dependent reduction of glutamyl-tRNA(Glu) to glutamate 1-semialdehyde (GSA). In Desulfatibacillum aliphaticivorans, this protein is Glutamyl-tRNA reductase.